A 512-amino-acid chain; its full sequence is Histidine ammonia-lyase (512 aa).

Residues 143–145 (CSG) constitute a cross-link (5-imidazolinone (Cys-Gly)). Ser144 is modified (2,3-didehydroalanine (Ser)).

It belongs to the PAL/histidase family. In terms of processing, contains an active site 4-methylidene-imidazol-5-one (MIO), which is formed autocatalytically by cyclization and dehydration of residues Cys-Ser-Gly.

Its subcellular location is the cytoplasm. The catalysed reaction is L-histidine = trans-urocanate + NH4(+). The protein operates within amino-acid degradation; L-histidine degradation into L-glutamate; N-formimidoyl-L-glutamate from L-histidine: step 1/3. This chain is Histidine ammonia-lyase, found in Streptomyces coelicolor (strain ATCC BAA-471 / A3(2) / M145).